Consider the following 492-residue polypeptide: Probable proline dehydrogenase, mitochondrial (492 aa).

Belongs to the proline oxidase family. Requires FAD as cofactor.

It localises to the mitochondrion. The catalysed reaction is L-proline + a quinone = (S)-1-pyrroline-5-carboxylate + a quinol + H(+). In terms of biological role, converts proline to delta-1-pyrroline-5-carboxylate. The chain is Probable proline dehydrogenase, mitochondrial from Schizosaccharomyces pombe (strain 972 / ATCC 24843) (Fission yeast).